The chain runs to 796 residues: Phenylalanine--tRNA ligase beta subunit (796 aa).

Positions 39-149 constitute a tRNA-binding domain; it reads SAALKSFRVA…GDAPLGTTFA (111 aa). Residues 398 to 470 enclose the B5 domain; the sequence is LARKALAYDP…RVHGLDAVPS (73 aa). Residues Asp448, Asp454, Glu457, and Glu458 each contribute to the Mg(2+) site. Residues 703 to 795 enclose the FDX-ACB domain; it reads PALQAVTRDF…AAGKLGAELR (93 aa).

It belongs to the phenylalanyl-tRNA synthetase beta subunit family. Type 1 subfamily. In terms of assembly, tetramer of two alpha and two beta subunits. Mg(2+) is required as a cofactor.

It localises to the cytoplasm. It catalyses the reaction tRNA(Phe) + L-phenylalanine + ATP = L-phenylalanyl-tRNA(Phe) + AMP + diphosphate + H(+). The protein is Phenylalanine--tRNA ligase beta subunit of Novosphingobium aromaticivorans (strain ATCC 700278 / DSM 12444 / CCUG 56034 / CIP 105152 / NBRC 16084 / F199).